Here is a 284-residue protein sequence, read N- to C-terminus: Insulin-like growth factor-binding protein 2 (284 aa).

The signal sequence occupies residues Met1–Ala21. The 84-residue stretch at Val23–Arg106 folds into the IGFBP N-terminal domain. Intrachain disulfides connect Cys27/Cys56, Cys30/Cys58, Cys38/Cys59, Cys47/Cys62, Cys70/Cys83, and Cys77/Cys103. Residues Asp108–Arg184 are disordered. The segment covering Arg117–Asp127 has biased composition (basic and acidic residues). Residues Glu136–Ala145 are compositionally biased toward low complexity. The span at Lys152 to Lys180 shows a compositional bias: basic and acidic residues. One can recognise a Thyroglobulin type-1 domain in the interval Arg184–Cys266. Disulfide bonds link Cys187–Cys221, Cys232–Cys243, and Cys245–Cys266. A Cell attachment site motif is present at residues Arg261–Asp263.

Interacts with igf1 and igf2.

The protein resides in the secreted. Functionally, IGF-binding proteins prolong the half-life of the IGFs and have been shown to either inhibit or stimulate the growth promoting effects of the IGFs on cell culture. They alter the interaction of IGFs with their cell surface receptors. This Xenopus tropicalis (Western clawed frog) protein is Insulin-like growth factor-binding protein 2.